Reading from the N-terminus, the 31-residue chain is Potassium channel toxin alpha-KTx 19.2 (31 aa).

Intrachain disulfides connect Cys-3/Cys-22, Cys-8/Cys-27, and Cys-12/Cys-29.

This sequence belongs to the short scorpion toxin superfamily. Potassium channel inhibitor family. Alpha-KTx 19 subfamily. As to quaternary structure, monomer. Expressed by the venom gland.

The protein localises to the secreted. Blocks voltage-gated potassium channels rKv1.1/KCNA1, rKv1.2/KCNA2, hKv1.3/KCNA3, rKv1.6/KCNA6 (IC(50)=75.9 nM) and, to a lesser extent, Shaker IR (with the inactivation domain removed). The protein is Potassium channel toxin alpha-KTx 19.2 of Buthus occitanus tunetanus (Common European scorpion).